The following is a 447-amino-acid chain: NADP-specific glutamate dehydrogenase (447 aa).

Residues K92, Q113, and K116 each coordinate substrate. The Proton donor role is filled by K128. G167 provides a ligand contact to substrate. NADP(+) contacts are provided by T212 and N243. S379 contacts substrate.

Belongs to the Glu/Leu/Phe/Val dehydrogenases family. Homohexamer.

It catalyses the reaction L-glutamate + NADP(+) + H2O = 2-oxoglutarate + NH4(+) + NADPH + H(+). Its function is as follows. Catalyzes the reversible oxidative deamination of glutamate to alpha-ketoglutarate and ammonia. The chain is NADP-specific glutamate dehydrogenase (gdh) from Corynebacterium efficiens (strain DSM 44549 / YS-314 / AJ 12310 / JCM 11189 / NBRC 100395).